The sequence spans 274 residues: Thiazole synthase (274 aa).

The Schiff-base intermediate with DXP role is filled by Lys-115. 1-deoxy-D-xylulose 5-phosphate-binding positions include Gly-176, Ala-202 to Gly-203, and Asn-224 to Ser-225.

It belongs to the ThiG family. Homotetramer. Forms heterodimers with either ThiH or ThiS.

Its subcellular location is the cytoplasm. The catalysed reaction is [ThiS sulfur-carrier protein]-C-terminal-Gly-aminoethanethioate + 2-iminoacetate + 1-deoxy-D-xylulose 5-phosphate = [ThiS sulfur-carrier protein]-C-terminal Gly-Gly + 2-[(2R,5Z)-2-carboxy-4-methylthiazol-5(2H)-ylidene]ethyl phosphate + 2 H2O + H(+). It functions in the pathway cofactor biosynthesis; thiamine diphosphate biosynthesis. Functionally, catalyzes the rearrangement of 1-deoxy-D-xylulose 5-phosphate (DXP) to produce the thiazole phosphate moiety of thiamine. Sulfur is provided by the thiocarboxylate moiety of the carrier protein ThiS. In vitro, sulfur can be provided by H(2)S. This chain is Thiazole synthase, found in Psychrobacter cryohalolentis (strain ATCC BAA-1226 / DSM 17306 / VKM B-2378 / K5).